Here is a 602-residue protein sequence, read N- to C-terminus: uncharacterized protein (602 aa).

The 202-residue stretch at 271-472 folds into the MCM domain; the sequence is IIDILADILI…RDEEVAKYIF (202 aa). 315–322 contacts ATP; sequence TEVGIDKT.

Belongs to the MCM family.

This is an uncharacterized protein from Methanocaldococcus jannaschii (strain ATCC 43067 / DSM 2661 / JAL-1 / JCM 10045 / NBRC 100440) (Methanococcus jannaschii).